Consider the following 209-residue polypeptide: Protein-L-isoaspartate O-methyltransferase (209 aa).

Residue serine 60 is part of the active site.

The protein belongs to the methyltransferase superfamily. L-isoaspartyl/D-aspartyl protein methyltransferase family.

It is found in the cytoplasm. The enzyme catalyses [protein]-L-isoaspartate + S-adenosyl-L-methionine = [protein]-L-isoaspartate alpha-methyl ester + S-adenosyl-L-homocysteine. Its function is as follows. Catalyzes the methyl esterification of L-isoaspartyl residues in peptides and proteins that result from spontaneous decomposition of normal L-aspartyl and L-asparaginyl residues. It plays a role in the repair and/or degradation of damaged proteins. The polypeptide is Protein-L-isoaspartate O-methyltransferase (Methanococcus vannielii (strain ATCC 35089 / DSM 1224 / JCM 13029 / OCM 148 / SB)).